The sequence spans 383 residues: Lipid-A-disaccharide synthase (383 aa).

This sequence belongs to the LpxB family.

The enzyme catalyses a lipid X + a UDP-2-N,3-O-bis[(3R)-3-hydroxyacyl]-alpha-D-glucosamine = a lipid A disaccharide + UDP + H(+). The protein operates within bacterial outer membrane biogenesis; LPS lipid A biosynthesis. Condensation of UDP-2,3-diacylglucosamine and 2,3-diacylglucosamine-1-phosphate to form lipid A disaccharide, a precursor of lipid A, a phosphorylated glycolipid that anchors the lipopolysaccharide to the outer membrane of the cell. The polypeptide is Lipid-A-disaccharide synthase (Trichlorobacter lovleyi (strain ATCC BAA-1151 / DSM 17278 / SZ) (Geobacter lovleyi)).